The following is a 401-amino-acid chain: Forkhead box protein H1 (401 aa).

Positions 32–57 (MGPRDNSQLRPPEAESLSKTPKRRKK) are disordered. A DNA-binding region (fork-head) is located at residues 64-163 (KPPYTYLAMI…QNTALCRRWQ (100 aa)). The interval 179–251 (VLHGQPYQPP…PSSSSETPLW (73 aa)) is disordered. Over residues 185-195 (YQPPSPPPPPR) the composition is skewed to pro residues. Over residues 221–230 (GQSTAAQAGT) the composition is skewed to polar residues. The segment at 307-390 (LWGQLPTSYL…VSHPRDLAAP (84 aa)) is SMAD-interaction domain (SID). A Fast/FoxH1 motif 1 (FM1) motif is present at residues 311–315 (LPTSY). The Fast/FoxH1 motif 2 (FM2) motif lies at 321–327 (PNVVMPL). The short motif at 363–384 (LDSLFQGVPPNKSIYDVWVSHP) is the SMAD interaction motif (SIM) element.

In terms of assembly, interacts with the MH2 domains of SMAD2 and SMAD3.

It localises to the nucleus. Transcriptional activator. Recognizes and binds to the DNA sequence 5'-TGT[GT][GT]ATT-3'. Required for induction of the goosecoid (GSC) promoter by TGF-beta or activin signaling. Forms a transcriptionally active complex containing FOXH1/SMAD2/SMAD4 on a site on the GSC promoter called TARE (TGF-beta/activin response element). The polypeptide is Forkhead box protein H1 (Foxh1) (Mus musculus (Mouse)).